The chain runs to 184 residues: Endoribonuclease YbeY (184 aa).

Zn(2+)-binding residues include His146, His150, and His156.

Belongs to the endoribonuclease YbeY family. It depends on Zn(2+) as a cofactor.

It is found in the cytoplasm. Functionally, single strand-specific metallo-endoribonuclease involved in late-stage 70S ribosome quality control and in maturation of the 3' terminus of the 16S rRNA. This Nostoc sp. (strain PCC 7120 / SAG 25.82 / UTEX 2576) protein is Endoribonuclease YbeY.